Consider the following 152-residue polypeptide: Transcriptional regulator MraZ (152 aa).

SpoVT-AbrB domains follow at residues 5–52 and 81–124; these read ASAI…PLDE and AHEC…DEAA.

The protein belongs to the MraZ family. In terms of assembly, forms oligomers.

The protein localises to the cytoplasm. Its subcellular location is the nucleoid. The polypeptide is Transcriptional regulator MraZ (Shewanella violacea (strain JCM 10179 / CIP 106290 / LMG 19151 / DSS12)).